A 31-amino-acid chain; its full sequence is Cytochrome b6-f complex subunit 6 (31 aa).

Residues L4–N26 form a helical membrane-spanning segment.

This sequence belongs to the PetL family. In terms of assembly, the 4 large subunits of the cytochrome b6-f complex are cytochrome b6, subunit IV (17 kDa polypeptide, PetD), cytochrome f and the Rieske protein, while the 4 small subunits are PetG, PetL, PetM and PetN. The complex functions as a dimer.

Its subcellular location is the plastid. It is found in the chloroplast thylakoid membrane. Component of the cytochrome b6-f complex, which mediates electron transfer between photosystem II (PSII) and photosystem I (PSI), cyclic electron flow around PSI, and state transitions. PetL is important for photoautotrophic growth as well as for electron transfer efficiency and stability of the cytochrome b6-f complex. The sequence is that of Cytochrome b6-f complex subunit 6 from Amaranthus caudatus (Love-lies-bleeding).